Reading from the N-terminus, the 42-residue chain is Photosystem I reaction center subunit IX (42 aa).

A helical transmembrane segment spans residues 7-27; sequence YLSVAPVLSTLWFGALAGLLI.

The protein belongs to the PsaJ family.

It is found in the plastid. The protein resides in the chloroplast thylakoid membrane. Functionally, may help in the organization of the PsaE and PsaF subunits. The polypeptide is Photosystem I reaction center subunit IX (Guizotia abyssinica (Niger)).